Consider the following 147-residue polypeptide: Small ribosomal subunit protein uS12 (147 aa).

It belongs to the universal ribosomal protein uS12 family. In terms of assembly, part of the 30S ribosomal subunit.

In terms of biological role, with S4 and S5 plays an important role in translational accuracy. Located at the interface of the 30S and 50S subunits. The chain is Small ribosomal subunit protein uS12 from Pyrococcus horikoshii (strain ATCC 700860 / DSM 12428 / JCM 9974 / NBRC 100139 / OT-3).